A 276-amino-acid polypeptide reads, in one-letter code: Glutamate 5-kinase (276 aa).

K14 is an ATP binding site. Substrate contacts are provided by S54, D141, and N157. ATP is bound by residues 177-178 (SD) and 219-225 (TGGMLTK).

This sequence belongs to the glutamate 5-kinase family.

It is found in the cytoplasm. It carries out the reaction L-glutamate + ATP = L-glutamyl 5-phosphate + ADP. The protein operates within amino-acid biosynthesis; L-proline biosynthesis; L-glutamate 5-semialdehyde from L-glutamate: step 1/2. Its function is as follows. Catalyzes the transfer of a phosphate group to glutamate to form L-glutamate 5-phosphate. In Listeria monocytogenes serotype 4b (strain CLIP80459), this protein is Glutamate 5-kinase.